The following is a 550-amino-acid chain: Phospholipase B-like 1 (550 aa).

Residues 1–39 form the signal peptide; that stretch reads MCHRSHGRSLRPPSPLLLLLPLLLQSPWAAGAAEKHNSA. The N-linked (GlcNAc...) (high mannose) asparagine; alternate glycan is linked to Asn-72. Asn-72 carries an N-linked (GlcNAc...) (hybrid) asparagine; alternate glycan. The propeptide at 210 to 228 is removed in mature form; sequence LSPTKSSSLKKFKIWEMGH. Asn-309 and Asn-412 each carry an N-linked (GlcNAc...) (high mannose) asparagine; alternate glycan. N-linked (GlcNAc...) (hybrid) asparagine; alternate glycosylation is found at Asn-309 and Asn-412. 2 disulfides stabilise this stretch: Cys-471–Cys-476 and Cys-475–Cys-490. Asn-527 carries an N-linked (GlcNAc...) (high mannose) asparagine; alternate glycan. Residue Asn-527 is glycosylated (N-linked (GlcNAc...) (hybrid) asparagine; alternate).

This sequence belongs to the phospholipase B-like family. In terms of assembly, may form a homodimer, each monomer is composed of a chain A and a chain B. The maturation cleavages that produces chains A and B are required to open the putative substrate binding pocket. Both chains A and B remain associated in the mature protein.

Its subcellular location is the lysosome. Its function is as follows. Exhibits weak phospholipase activity, acting on various phospholipids, including phosphatidylcholine, phosphatidylinositol, phosphatidylethanolamine and lysophospholipids. However, in view of the small size of the putative binding pocket, it has been proposed that it may act rather as an amidase or a peptidase. This Rattus norvegicus (Rat) protein is Phospholipase B-like 1 (Plbd1).